Here is a 540-residue protein sequence, read N- to C-terminus: Anti-sigma-I factor RsgI7 (540 aa).

The region spanning 1–48 (MRAMVVDMNDKYAVVVNKEGQYIKIKRKAEHRLGYQVELPDRVIGFER) is the RsgI N-terminal anti-sigma domain. Topologically, residues 1–50 (MRAMVVDMNDKYAVVVNKEGQYIKIKRKAEHRLGYQVELPDRVIGFERRT) are cytoplasmic. A helical membrane pass occupies residues 51 to 73 (LLKVVSVAAALLIVSSISFAVYS). Topologically, residues 74–540 (YNLPYSYVNV…PGKEILKKRC (467 aa)) are extracellular. 5 stretches are compositionally biased toward basic and acidic residues: residues 238–256 (DIKK…KKVN), 319–329 (SGIDKGNKDSK), 338–351 (NDVK…KTNS), 359–370 (VSKDNKNDKADG), and 398–419 (SKDD…EDNK). Disordered stretches follow at residues 238–429 (DIKK…CPQY) and 481–540 (QEEQ…KKRC). The stretch at 451–501 (KEDMTKQNDEWFKKMQEEQKKQYDEWLKKMQEEQKKQHDEWVKKMEEMKNT) forms a coiled coil.

As to quaternary structure, interacts (via RsgI N-terminal anti-sigma domain) with SigI7.

It localises to the cell membrane. Anti-sigma factor for SigI7. Negatively regulates SigI7 activity through direct interaction. The chain is Anti-sigma-I factor RsgI7 from Acetivibrio thermocellus (strain ATCC 27405 / DSM 1237 / JCM 9322 / NBRC 103400 / NCIMB 10682 / NRRL B-4536 / VPI 7372) (Clostridium thermocellum).